A 329-amino-acid polypeptide reads, in one-letter code: MMRSFVSLISLLLLLSFSSSVLSTKKSSFQKLPVPGNRTGPEAFAFDSTGKGFYTGVTGGKILKYLPKKGYVDFAQITNSSKSSLCDGALGTTNVEKCGRPAGIAFNTKTGDLYVADAALGLHVIPRRGGLAKKIADSVGGKPFLFLDGLDVDPTTGVVYFTSFSSTFGPRDVLKAVATKDSTGKFFKYDPSKKVVTVLMEGLSGSAGCAVSSDGSFVLVGQFTKSNIKRYWIKGSKAGTSEDFTNSVSNPDNIKRIGSTGNFWVASVVNSATGPTNPSAVKVSSAGKVLQTIPLKDKFGDTLVSEVNEYKGQLYIGALFGPFAGILKL.

A signal peptide spans M1–S23. N-linked (GlcNAc...) asparagine glycans are attached at residues N37 and N79.

This sequence belongs to the strictosidine synthase family.

The protein localises to the vacuole. The enzyme catalyses 3alpha(S)-strictosidine + H2O = secologanin + tryptamine. It participates in alkaloid biosynthesis; 3alpha(S)-strictosidine biosynthesis; 3alpha(S)-strictosidine from secologanin and tryptamine: step 1/1. Catalyzes the stereospecific condensation of tryptamine with secologanin to form strictosidine, the key intermediate of indole alkaloid biosynthesis. This chain is Protein STRICTOSIDINE SYNTHASE-LIKE 11, found in Arabidopsis thaliana (Mouse-ear cress).